Here is a 153-residue protein sequence, read N- to C-terminus: Phosphoribosyl-AMP cyclohydrolase (153 aa).

A Mg(2+)-binding site is contributed by Asp-93. Cys-94 provides a ligand contact to Zn(2+). Residues Asp-95 and Asp-97 each coordinate Mg(2+). The Zn(2+) site is built by Cys-112 and Cys-119.

Belongs to the PRA-CH family. Homodimer. Mg(2+) is required as a cofactor. Zn(2+) serves as cofactor.

Its subcellular location is the cytoplasm. The catalysed reaction is 1-(5-phospho-beta-D-ribosyl)-5'-AMP + H2O = 1-(5-phospho-beta-D-ribosyl)-5-[(5-phospho-beta-D-ribosylamino)methylideneamino]imidazole-4-carboxamide. Its pathway is amino-acid biosynthesis; L-histidine biosynthesis; L-histidine from 5-phospho-alpha-D-ribose 1-diphosphate: step 3/9. Its function is as follows. Catalyzes the hydrolysis of the adenine ring of phosphoribosyl-AMP. The sequence is that of Phosphoribosyl-AMP cyclohydrolase from Mesorhizobium japonicum (strain LMG 29417 / CECT 9101 / MAFF 303099) (Mesorhizobium loti (strain MAFF 303099)).